The sequence spans 466 residues: MINQDSIVALATPSGAGAIAVIRISGAEAVSIGNSVFKSIKNKDLTKQKTHTLHLGHIVDNGKTLDEVLVSVFKGPNSYTGEDTIEISCHGSTYIQQQIIQLLLRKGCRMADAGEFTLRAFLNGKLDLSQAEAVADLISSDNEASHHIAMQQMRGGFSNEIAKLREELLNFASLIELELDFAEEDVEFADRTQFHELLNRIEFVLKRLIDSFAVGNVIKNGIPVAIVGEPNVGKSTLLNALLNEERAIVSDIAGTTRDTIEDELVIGGIGFRFIDTAGIRETKDVVESIGIKKTFEKIDQAQVVIYLFDGLKFKASSSEFVSEIEQIKNKYPLKPLLIVVNKKDILSEDEVLNITQKLENLNAKLLLISAKQKIGVEELKNELLSFVNTGALRNNETIVTNTRHYDSLLKALDEIQKVKFGLETNLSSDLIALDIKEALYQFGLITGQVSNDELLGNIFANFCIGK.

(6S)-5-formyl-5,6,7,8-tetrahydrofolate contacts are provided by Arg-23, Glu-86, and Lys-125. Positions 221–388 constitute a TrmE-type G domain; the sequence is GIPVAIVGEP…LKNELLSFVN (168 aa). A K(+)-binding site is contributed by Asn-231. GTP contacts are provided by residues 231 to 236, 250 to 256, and 275 to 278; these read NVGKST, SDIAGTT, and DTAG. Residue Ser-235 coordinates Mg(2+). K(+) contacts are provided by Ser-250, Ile-252, and Thr-255. Thr-256 lines the Mg(2+) pocket. (6S)-5-formyl-5,6,7,8-tetrahydrofolate is bound at residue Lys-466.

It belongs to the TRAFAC class TrmE-Era-EngA-EngB-Septin-like GTPase superfamily. TrmE GTPase family. Homodimer. Heterotetramer of two MnmE and two MnmG subunits. K(+) is required as a cofactor.

It is found in the cytoplasm. Functionally, exhibits a very high intrinsic GTPase hydrolysis rate. Involved in the addition of a carboxymethylaminomethyl (cmnm) group at the wobble position (U34) of certain tRNAs, forming tRNA-cmnm(5)s(2)U34. In Flavobacterium johnsoniae (strain ATCC 17061 / DSM 2064 / JCM 8514 / BCRC 14874 / CCUG 350202 / NBRC 14942 / NCIMB 11054 / UW101) (Cytophaga johnsonae), this protein is tRNA modification GTPase MnmE.